We begin with the raw amino-acid sequence, 320 residues long: Transcription factor NAI1 (320 aa).

Residues 53-105 (TKQMKTNNNMNSTSSSPSSSSSSGSRTSQVISFGSPDTKTNPVETSLNFSNQV) are disordered. Residues 58–80 (TNNNMNSTSSSPSSSSSSGSRTS) show a composition bias toward low complexity. Residues 81 to 105 (QVISFGSPDTKTNPVETSLNFSNQV) show a composition bias toward polar residues. The bHLH domain maps to 128-177 (HLLKEHVLAERKRRQKLNERLIALSALLPGLKKTDKATVLEDAIKHLKQL).

Homodimer. Expressed constitutively in roots, leaves, stems, and flowers.

It is found in the nucleus. Functionally, transcription activator that regulates the expression of at least NAI2, PYK10 and PBP1. Required for and mediates the formation of endoplasmic reticulum bodies (ER bodies). Involved in the symbiotic interactions with the endophytes of the Sebacinaceae fungus family, such as Piriformospora indica and Sebacina. In Arabidopsis thaliana (Mouse-ear cress), this protein is Transcription factor NAI1 (NAI1).